A 276-amino-acid polypeptide reads, in one-letter code: Biotin synthase (276 aa).

Positions 1–226 constitute a Radical SAM core domain; sequence MKKIYLCAIS…EAIIMLAGGR (226 aa). C17, C21, and C24 together coordinate [4Fe-4S] cluster. The [2Fe-2S] cluster site is built by C61, C95, and C153.

Belongs to the radical SAM superfamily. Biotin synthase family. As to quaternary structure, homodimer. It depends on [4Fe-4S] cluster as a cofactor. The cofactor is [2Fe-2S] cluster.

It carries out the reaction (4R,5S)-dethiobiotin + (sulfur carrier)-SH + 2 reduced [2Fe-2S]-[ferredoxin] + 2 S-adenosyl-L-methionine = (sulfur carrier)-H + biotin + 2 5'-deoxyadenosine + 2 L-methionine + 2 oxidized [2Fe-2S]-[ferredoxin]. Its pathway is cofactor biosynthesis; biotin biosynthesis; biotin from 7,8-diaminononanoate: step 2/2. Its function is as follows. Catalyzes the conversion of dethiobiotin (DTB) to biotin by the insertion of a sulfur atom into dethiobiotin via a radical-based mechanism. This Nautilia profundicola (strain ATCC BAA-1463 / DSM 18972 / AmH) protein is Biotin synthase.